A 308-amino-acid chain; its full sequence is Dual oxidase maturation factor 1 (308 aa).

The Extracellular portion of the chain corresponds to 1 to 21 (MQANIFPFYPQPRTSFKFDTK). A helical transmembrane segment spans residues 22-42 (IIEIIIICIVTACTFIIILPG). The Cytoplasmic segment spans residues 43–49 (IRGKSRS). A helical membrane pass occupies residues 50–70 (IWLFRILTSLFIGAVILAVNF). The Extracellular portion of the chain corresponds to 71–172 (TSDWETGIVT…SPCGLFQQYC (102 aa)). N-linked (GlcNAc...) asparagine glycosylation is found at N94, N107, and N119. The helical transmembrane segment at 173-195 (ISTYYSSEIMWVAFGSWILYNVL) threads the bilayer. Over 196-199 (FSMP) the chain is Cytoplasmic. Residues 200 to 220 (VILYGICMMFVTAICMLVSLI) traverse the membrane as a helical segment. Residues 221-247 (SFASVRQAPVCNIHFGNAVLKTHFGVS) are Extracellular-facing. Residues 248–268 (YWLSLVTGLFCLIVSLVLLFL) traverse the membrane as a helical segment. The Cytoplasmic portion of the chain corresponds to 269 to 308 (YKTQPKVIRLIFSYGEEEDLSDKSENEEEHSSALSLNEML).

This sequence belongs to the DUOXA family.

The protein localises to the membrane. In terms of biological role, possible role in maturation and transport from the endoplasmic reticulum to the plasma membrane of functional dual oxidase. The chain is Dual oxidase maturation factor 1 (duoxa1) from Xenopus tropicalis (Western clawed frog).